The primary structure comprises 128 residues: Probable 4-amino-4-deoxy-L-arabinose-phosphoundecaprenol flippase subunit ArnF (128 aa).

At 1-10 (MKGYLWGGAS) the chain is on the cytoplasmic side. A helical membrane pass occupies residues 11 to 31 (VVLVTVAQLVLKWGMMNIPLL). The Periplasmic segment spans residues 32–47 (SLADINVQFLTMYFVQ). Residues 48–68 (LASVMCGLMGYALSMLCWFFA) form a helical membrane-spanning segment. Residues 69–77 (LRYLPLNRA) are Cytoplasmic-facing. The helical transmembrane segment at 78 to 98 (YPLLSLSYALVYLGAVLLPWF) threads the bilayer. The Periplasmic segment spans residues 99–101 (NEP). The helical transmembrane segment at 102–122 (ATLLKTLGAGFILLGIWLINI) threads the bilayer. The Cytoplasmic segment spans residues 123–128 (KPIKAS).

This sequence belongs to the ArnF family. Heterodimer of ArnE and ArnF.

It is found in the cell inner membrane. It participates in bacterial outer membrane biogenesis; lipopolysaccharide biosynthesis. Translocates 4-amino-4-deoxy-L-arabinose-phosphoundecaprenol (alpha-L-Ara4N-phosphoundecaprenol) from the cytoplasmic to the periplasmic side of the inner membrane. The sequence is that of Probable 4-amino-4-deoxy-L-arabinose-phosphoundecaprenol flippase subunit ArnF from Yersinia pseudotuberculosis serotype O:1b (strain IP 31758).